A 550-amino-acid chain; its full sequence is Retron Ec78 probable ATPase (550 aa).

Positions 93–100 (GNNGKGKT) match the ATP-binding motif.

Functionally, probable ATPase component of antiviral defense system retron Ec78, composed of a non-coding RNA (ncRNA), a reverse transcriptase (RT), this protein and a putative HNH endonuclease. Expression of retron Ec78 confers protection against bacteriophage T5. At multiplicity of infection (MOI) of 0.02 cultures slow growth when infected with T5 but do not collapse, at MOI 2 cultures enter growth stasis. The chain is Retron Ec78 probable ATPase from Escherichia coli.